Reading from the N-terminus, the 849-residue chain is Trehalose-phosphatase (849 aa).

Residues M1 to T558 form a glycosyltransferase region.

The protein in the N-terminal section; belongs to the glycosyltransferase 20 family. This sequence in the C-terminal section; belongs to the trehalose phosphatase family. The cofactor is Mg(2+).

It is found in the cytoplasm. It localises to the nucleus. It carries out the reaction alpha,alpha-trehalose 6-phosphate + H2O = alpha,alpha-trehalose + phosphate. It functions in the pathway carbohydrate biosynthesis. Phosphatase catalytic subunit of the trehalose synthase complex that catalyzes the production of trehalose from glucose-6-phosphate and UDP-glucose in a two step process. In Schizosaccharomyces pombe (strain 972 / ATCC 24843) (Fission yeast), this protein is Trehalose-phosphatase (tps2).